Here is a 186-residue protein sequence, read N- to C-terminus: Biofilm operon icaADBC HTH-type negative transcriptional regulator IcaR (186 aa).

Residues 1–59 enclose the HTH tetR-type domain; that stretch reads MKDKIIDNAITLFSEKGYDGTTLDDIAKSVNIKKASLYYHFDSKKSIYEQSVKCCFDYL. The segment at residues 22–41 is a DNA-binding region (H-T-H motif); the sequence is TLDDIAKSVNIKKASLYYHF.

Homodimer.

Represses transcription of the icaADBC operon necessary for biofilm production. This is Biofilm operon icaADBC HTH-type negative transcriptional regulator IcaR (icaR) from Staphylococcus aureus (strain NCTC 8325 / PS 47).